A 493-amino-acid polypeptide reads, in one-letter code: Protein nucleotidyltransferase YdiU (493 aa).

The ATP site is built by glycine 81, glycine 83, arginine 84, lysine 103, aspartate 115, glycine 116, arginine 166, and arginine 173. Residue aspartate 244 is the Proton acceptor of the active site. 2 residues coordinate Mg(2+): asparagine 245 and aspartate 254. Residue aspartate 254 coordinates ATP.

Belongs to the SELO family. Requires Mg(2+) as cofactor. The cofactor is Mn(2+).

It carries out the reaction L-seryl-[protein] + ATP = 3-O-(5'-adenylyl)-L-seryl-[protein] + diphosphate. The enzyme catalyses L-threonyl-[protein] + ATP = 3-O-(5'-adenylyl)-L-threonyl-[protein] + diphosphate. The catalysed reaction is L-tyrosyl-[protein] + ATP = O-(5'-adenylyl)-L-tyrosyl-[protein] + diphosphate. It catalyses the reaction L-histidyl-[protein] + UTP = N(tele)-(5'-uridylyl)-L-histidyl-[protein] + diphosphate. It carries out the reaction L-seryl-[protein] + UTP = O-(5'-uridylyl)-L-seryl-[protein] + diphosphate. The enzyme catalyses L-tyrosyl-[protein] + UTP = O-(5'-uridylyl)-L-tyrosyl-[protein] + diphosphate. Nucleotidyltransferase involved in the post-translational modification of proteins. It can catalyze the addition of adenosine monophosphate (AMP) or uridine monophosphate (UMP) to a protein, resulting in modifications known as AMPylation and UMPylation. This is Protein nucleotidyltransferase YdiU from Shewanella frigidimarina (strain NCIMB 400).